The sequence spans 197 residues: Large ribosomal subunit protein bL25 (197 aa).

It belongs to the bacterial ribosomal protein bL25 family. CTC subfamily. As to quaternary structure, part of the 50S ribosomal subunit; part of the 5S rRNA/L5/L18/L25 subcomplex. Contacts the 5S rRNA. Binds to the 5S rRNA independently of L5 and L18.

In terms of biological role, this is one of the proteins that binds to the 5S RNA in the ribosome where it forms part of the central protuberance. The polypeptide is Large ribosomal subunit protein bL25 (Caulobacter vibrioides (strain ATCC 19089 / CIP 103742 / CB 15) (Caulobacter crescentus)).